Reading from the N-terminus, the 133-residue chain is Large ribosomal subunit protein eL32y (133 aa).

This sequence belongs to the eukaryotic ribosomal protein eL32 family.

This is Large ribosomal subunit protein eL32y (RPL32B) from Arabidopsis thaliana (Mouse-ear cress).